The following is a 529-amino-acid chain: Peptide chain release factor 3 (529 aa).

The region spanning 11–280 (AKRRTFAIIS…GLVEWAPAPM (270 aa)) is the tr-type G domain. Residues 20-27 (SHPDAGKT), 88-92 (DTPGH), and 142-145 (NKLD) contribute to the GTP site.

It belongs to the TRAFAC class translation factor GTPase superfamily. Classic translation factor GTPase family. PrfC subfamily.

It is found in the cytoplasm. Functionally, increases the formation of ribosomal termination complexes and stimulates activities of RF-1 and RF-2. It binds guanine nucleotides and has strong preference for UGA stop codons. It may interact directly with the ribosome. The stimulation of RF-1 and RF-2 is significantly reduced by GTP and GDP, but not by GMP. The chain is Peptide chain release factor 3 from Shigella flexneri.